A 354-amino-acid polypeptide reads, in one-letter code: Aspartate carbamoyltransferase catalytic subunit (354 aa).

Carbamoyl phosphate is bound by residues R67 and T68. K95 contributes to the L-aspartate binding site. Residues R117, H150, and Q153 each contribute to the carbamoyl phosphate site. 2 residues coordinate L-aspartate: R190 and R261. Carbamoyl phosphate-binding residues include G302 and P303.

It belongs to the aspartate/ornithine carbamoyltransferase superfamily. ATCase family. As to quaternary structure, heterododecamer (2C3:3R2) of six catalytic PyrB chains organized as two trimers (C3), and six regulatory PyrI chains organized as three dimers (R2).

It carries out the reaction carbamoyl phosphate + L-aspartate = N-carbamoyl-L-aspartate + phosphate + H(+). The protein operates within pyrimidine metabolism; UMP biosynthesis via de novo pathway; (S)-dihydroorotate from bicarbonate: step 2/3. Functionally, catalyzes the condensation of carbamoyl phosphate and aspartate to form carbamoyl aspartate and inorganic phosphate, the committed step in the de novo pyrimidine nucleotide biosynthesis pathway. The protein is Aspartate carbamoyltransferase catalytic subunit of Synechococcus sp. (strain RCC307).